A 102-amino-acid chain; its full sequence is Protein 108 (102 aa).

Positions 1-30 are cleaved as a signal peptide; sequence MASVKSSSSSSSSSFISLLLLILLVIVLQS. Intrachain disulfides connect C41-C77, C51-C66, C67-C92, and C79-C99.

This sequence belongs to the A9/FIL1 family. Stamen- and tapetum-specific.

The protein localises to the secreted. This is Protein 108 from Solanum lycopersicum (Tomato).